The sequence spans 161 residues: uncharacterized protein (161 aa).

Interacts with ribosomes.

This is an uncharacterized protein from Saccharomyces cerevisiae (strain ATCC 204508 / S288c) (Baker's yeast).